The following is a 410-amino-acid chain: Peptidase T (410 aa).

Position 79 (H79) interacts with Zn(2+). D81 is a catalytic residue. Position 142 (D142) interacts with Zn(2+). The Proton acceptor role is filled by E176. Zn(2+) is bound by residues E177, D199, and H381.

It belongs to the peptidase M20B family. Requires Zn(2+) as cofactor.

It localises to the cytoplasm. The catalysed reaction is Release of the N-terminal residue from a tripeptide.. Functionally, cleaves the N-terminal amino acid of tripeptides. The chain is Peptidase T from Bacillus thuringiensis (strain Al Hakam).